The following is a 301-amino-acid chain: Ribonuclease H2 subunit A (301 aa).

Methionine 1 is subject to N-acetylmethionine. One can recognise an RNase H type-2 domain in the interval 28–251 (PCVLGVDEAG…AQAILEKEAE (224 aa)). Aspartate 34, glutamate 35, and aspartate 142 together coordinate a divalent metal cation. The residue at position 217 (threonine 217) is a Phosphothreonine. At serine 258 the chain carries Phosphoserine.

This sequence belongs to the RNase HII family. Eukaryotic subfamily. As to quaternary structure, the RNase H2 complex is a heterotrimer composed of the catalytic subunit RNASEH2A and the non-catalytic subunits RNASEH2B and RNASEH2C. Requires Mn(2+) as cofactor. It depends on Mg(2+) as a cofactor.

The protein localises to the nucleus. It catalyses the reaction Endonucleolytic cleavage to 5'-phosphomonoester.. Functionally, catalytic subunit of RNase HII, an endonuclease that specifically degrades the RNA of RNA:DNA hybrids. Participates in DNA replication, possibly by mediating the removal of lagging-strand Okazaki fragment RNA primers during DNA replication. Mediates the excision of single ribonucleotides from DNA:RNA duplexes. This Rattus norvegicus (Rat) protein is Ribonuclease H2 subunit A (Rnaseh2a).